Here is a 241-residue protein sequence, read N- to C-terminus: Proteasome subunit alpha (241 aa).

It belongs to the peptidase T1A family. In terms of assembly, the 20S proteasome core is composed of 14 alpha and 14 beta subunits that assemble into four stacked heptameric rings, resulting in a barrel-shaped structure. The two inner rings, each composed of seven catalytic beta subunits, are sandwiched by two outer rings, each composed of seven alpha subunits. The catalytic chamber with the active sites is on the inside of the barrel. Has a gated structure, the ends of the cylinder being occluded by the N-termini of the alpha-subunits. Is capped by the proteasome-associated ATPase, ARC.

Its subcellular location is the cytoplasm. It functions in the pathway protein degradation; proteasomal Pup-dependent pathway. The formation of the proteasomal ATPase ARC-20S proteasome complex, likely via the docking of the C-termini of ARC into the intersubunit pockets in the alpha-rings, may trigger opening of the gate for substrate entry. Interconversion between the open-gate and close-gate conformations leads to a dynamic regulation of the 20S proteasome proteolysis activity. In terms of biological role, component of the proteasome core, a large protease complex with broad specificity involved in protein degradation. This is Proteasome subunit alpha from Parafrankia sp. (strain EAN1pec).